The primary structure comprises 119 residues: MSRVKRSVTAKKKRRKIFKLAKGFFGARSRLLRTATEAVNRALNYAFRDRRVRKREFRKLWIARINAASRAQGLTYSRLIDGLRKSHVEIDRKVLADIAVNDPRGFSEIVLLAKGETVS.

This sequence belongs to the bacterial ribosomal protein bL20 family.

Its function is as follows. Binds directly to 23S ribosomal RNA and is necessary for the in vitro assembly process of the 50S ribosomal subunit. It is not involved in the protein synthesizing functions of that subunit. This is Large ribosomal subunit protein bL20 from Syntrophus aciditrophicus (strain SB).